A 123-amino-acid polypeptide reads, in one-letter code: Holo-[acyl-carrier-protein] synthase (123 aa).

2 residues coordinate Mg(2+): Asp-8 and Glu-55.

The protein belongs to the P-Pant transferase superfamily. AcpS family. The cofactor is Mg(2+).

The protein resides in the cytoplasm. It carries out the reaction apo-[ACP] + CoA = holo-[ACP] + adenosine 3',5'-bisphosphate + H(+). Functionally, transfers the 4'-phosphopantetheine moiety from coenzyme A to a Ser of acyl-carrier-protein. The sequence is that of Holo-[acyl-carrier-protein] synthase from Solidesulfovibrio magneticus (strain ATCC 700980 / DSM 13731 / RS-1) (Desulfovibrio magneticus).